Reading from the N-terminus, the 317-residue chain is Thymidylate synthase (317 aa).

DUMP contacts are provided by residues R40 and 167-168; that span reads RR. The active-site Nucleophile is C187. Residues 216–219, N227, and 257–259 contribute to the dUMP site; these read RSCD and HVY. D219 is a (6R)-5,10-methylene-5,6,7,8-tetrahydrofolate binding site.

Belongs to the thymidylate synthase family. Homodimer.

The catalysed reaction is dUMP + (6R)-5,10-methylene-5,6,7,8-tetrahydrofolate = 7,8-dihydrofolate + dTMP. It participates in pyrimidine metabolism; dTTP biosynthesis. In Cryptococcus neoformans var. neoformans serotype D (strain B-3501A) (Filobasidiella neoformans), this protein is Thymidylate synthase (TMP1).